Reading from the N-terminus, the 448-residue chain is Oxysterol-binding protein homolog 6 (448 aa).

Residues 1 to 42 (MGSKKLTVGSDSHRLSKSSFSSNKSSHSATKDQPIDTDDIDE) are disordered. Serine 16 is modified (phosphoserine). The segment covering 17 to 28 (KSSFSSNKSSHS) has biased composition (low complexity). Residues 54-391 (IISQLRPGCD…PGEDLDYCIY (338 aa)) are OSBP-related domain (ORD). A 1,2-diacyl-sn-glycero-3-phospho-(1D-myo-inositol 4-phosphate) is bound by residues 64–69 (LTRITL), 126–129 (KPLN), and 157–158 (HH). A 1,2-diacyl-sn-glycero-3-phospho-L-serine-binding positions include 64–69 (LTRITL) and asparagine 129. Serine 183 provides a ligand contact to a 1,2-diacyl-sn-glycero-3-phospho-L-serine. 3 residues coordinate a 1,2-diacyl-sn-glycero-3-phospho-(1D-myo-inositol 4-phosphate): lysine 351, glutamate 355, and arginine 359.

The protein belongs to the OSBP family. As to quaternary structure, interacts with the AAA ATPase VPS4; regulates OSH6 membrane association. VPS4 is required for membrane dissociation of OSH6.

It localises to the cytoplasm. The protein resides in the cell membrane. Its subcellular location is the endoplasmic reticulum membrane. The enzyme catalyses a 1,2-diacyl-sn-glycero-3-phospho-L-serine(in) = a 1,2-diacyl-sn-glycero-3-phospho-L-serine(out). Its function is as follows. Lipid transport protein (LTP) involved in non-vesicular transfer of lipids between membranes. Functions in phosphoinositide-coupled directional transport of various lipids by carrying the lipid molecule in a hydrophobic pocket and transferring it between membranes through the cytosol. Involved in maintenance of intracellular sterol distribution and homeostasis. Catalyzes the lipid countertransport between the endoplasmic reticulum (ER) and the plasma membrane (PM). Specifically exchanges phosphatidylserine (PS) with phosphatidylinositol 4-phosphate (PI4P), delivering phosphatidylserine to the PM in exchange for PI4P, which is delivered to the ER-localized PI4P phosphatase SAC1 for degradation. Thus, by maintaining a PI4P gradient at the ER/PM interface, SAC1 drives PS transport. Binds phosphatidylserine and PI4P in a mutually exclusive manner. Also binds phosphatidic acid (PA). The protein is Oxysterol-binding protein homolog 6 of Saccharomyces cerevisiae (strain ATCC 204508 / S288c) (Baker's yeast).